The sequence spans 95 residues: Aspartyl/glutamyl-tRNA(Asn/Gln) amidotransferase subunit C (95 aa).

It belongs to the GatC family. In terms of assembly, heterotrimer of A, B and C subunits.

The enzyme catalyses L-glutamyl-tRNA(Gln) + L-glutamine + ATP + H2O = L-glutaminyl-tRNA(Gln) + L-glutamate + ADP + phosphate + H(+). The catalysed reaction is L-aspartyl-tRNA(Asn) + L-glutamine + ATP + H2O = L-asparaginyl-tRNA(Asn) + L-glutamate + ADP + phosphate + 2 H(+). Its function is as follows. Allows the formation of correctly charged Asn-tRNA(Asn) or Gln-tRNA(Gln) through the transamidation of misacylated Asp-tRNA(Asn) or Glu-tRNA(Gln) in organisms which lack either or both of asparaginyl-tRNA or glutaminyl-tRNA synthetases. The reaction takes place in the presence of glutamine and ATP through an activated phospho-Asp-tRNA(Asn) or phospho-Glu-tRNA(Gln). The polypeptide is Aspartyl/glutamyl-tRNA(Asn/Gln) amidotransferase subunit C (Rhizobium johnstonii (strain DSM 114642 / LMG 32736 / 3841) (Rhizobium leguminosarum bv. viciae)).